A 675-amino-acid chain; its full sequence is Dihydrolipoyllysine-residue acetyltransferase component of pyruvate dehydrogenase complex (675 aa).

The 76-residue stretch at 2–77 folds into the Lipoyl-binding 1 domain; sequence AFSVEMPELG…DVGGVIAIIG (76 aa). K43 is subject to N6-lipoyllysine. Residues 77–124 form a disordered region; that stretch reads GDADETPANEAPADEAPAPAEEEEPVKEEPKKEAAPEAPAATGAATDV. 2 stretches are compositionally biased toward low complexity: residues 84-95 and 112-124; these read ANEAPADEAPAP and PEAPAATGAATDV. One can recognise a Lipoyl-binding 2 domain in the interval 121-196; sequence ATDVEMPELG…DVGAVIARIG (76 aa). N6-lipoyllysine is present on K162. Residues 200–240 are disordered; sequence AAAAPAEEEAAPAEEEEPVKEEPKKEAAPEAPAATGAATDV. The span at 205–218 shows a compositional bias: acidic residues; the sequence is AEEEAAPAEEEEPV. One can recognise a Lipoyl-binding 3 domain in the interval 237-312; the sequence is ATDVEMPELG…DVGAVIARIG (76 aa). K278 carries the post-translational modification N6-lipoyllysine. Residues 316–368 form a disordered region; sequence AAAAPAEEEAAPAEEEEPVKEEPKKEEPKKEEPKKEAATTPAAASATVSASGD. Residues 321 to 334 show a composition bias toward acidic residues; that stretch reads AEEEAAPAEEEEPV. Basic and acidic residues predominate over residues 335 to 352; the sequence is KEEPKKEEPKKEEPKKEA. Residues 353-366 are compositionally biased toward low complexity; the sequence is ATTPAAASATVSAS. Residues 372–409 form the Peripheral subunit-binding (PSBD) domain; sequence YVTPLVRKLAEKHGVDLNTVTGTGIGGRIRKQDVLAAA. Residues H645 and D649 contribute to the active site.

Belongs to the 2-oxoacid dehydrogenase family. As to quaternary structure, forms a 24-polypeptide structural core with octahedral symmetry. Part of an unusual ODH/PDH supercomplex, consisting of AceE (E1), AceF (E2), and Lpd (E3) together with OdhA (E1+E2). (R)-lipoate serves as cofactor.

The catalysed reaction is N(6)-[(R)-dihydrolipoyl]-L-lysyl-[protein] + acetyl-CoA = N(6)-[(R)-S(8)-acetyldihydrolipoyl]-L-lysyl-[protein] + CoA. Functionally, is essential for both 2-oxoglutarate dehydrogenase (ODH) and pyruvate dehydrogenase (PDH) activities, but AceF has exclusively transacetylase (and no transsuccinylase) activity. The lipoyl residues required for ODH activity are likely provided by AceF. The sequence is that of Dihydrolipoyllysine-residue acetyltransferase component of pyruvate dehydrogenase complex (aceF) from Corynebacterium glutamicum (strain ATCC 13032 / DSM 20300 / JCM 1318 / BCRC 11384 / CCUG 27702 / LMG 3730 / NBRC 12168 / NCIMB 10025 / NRRL B-2784 / 534).